Here is a 62-residue protein sequence, read N- to C-terminus: Photosystem II reaction center protein Z (62 aa).

Helical transmembrane passes span S8–A28 and F41–I61.

Belongs to the PsbZ family. As to quaternary structure, PSII is composed of 1 copy each of membrane proteins PsbA, PsbB, PsbC, PsbD, PsbE, PsbF, PsbH, PsbI, PsbJ, PsbK, PsbL, PsbM, PsbT, PsbY, PsbZ, Psb30/Ycf12, at least 3 peripheral proteins of the oxygen-evolving complex and a large number of cofactors. It forms dimeric complexes.

It is found in the plastid. The protein resides in the chloroplast thylakoid membrane. In terms of biological role, may control the interaction of photosystem II (PSII) cores with the light-harvesting antenna, regulates electron flow through the 2 photosystem reaction centers. PSII is a light-driven water plastoquinone oxidoreductase, using light energy to abstract electrons from H(2)O, generating a proton gradient subsequently used for ATP formation. This is Photosystem II reaction center protein Z from Cryptomeria japonica (Japanese cedar).